The following is a 144-amino-acid chain: Hemoglobin subunit alpha-1 (144 aa).

Ser-1 carries the post-translational modification N-acetylserine. The 144-residue stretch at 1-144 folds into the Globin domain; that stretch reads SLTAKDKSVV…VSAALADKYR (144 aa). Position 61 (His-61) interacts with O2. Residue His-90 participates in heme b binding.

This sequence belongs to the globin family. In terms of assembly, heterotetramer of two alpha chains and two beta chains. In terms of tissue distribution, red blood cells.

Involved in oxygen transport from gills to the various peripheral tissues. In Oncorhynchus mykiss (Rainbow trout), this protein is Hemoglobin subunit alpha-1 (hba1).